A 350-amino-acid chain; its full sequence is Ion-translocating oxidoreductase complex subunit D (350 aa).

The next 5 helical transmembrane spans lie at 20-40 (VMVLVILCLIPGVFLQSYFFG), 44-64 (LIQISLACLAALASEAFILKI), 68-88 (PVLNTLKDASALLTAILLAIS), 89-109 (IPPLAPWWIVVIGTIFAIIFV), and 125-145 (MAGYVLLLISFPVQMTSWLPV). Residue Thr187 is modified to FMN phosphoryl threonine. The next 5 helical transmembrane spans lie at 215–235 (SWQQIYWINGAFLAGGLILLF), 241–261 (WHIPMSFLLGIGIFSFIAFAY), 267–287 (APPLFHLFSGATMLGAFFILS), 300–320 (ILYALLIAFIVVIIRNVGGYP), and 322–342 (AVAFAVLLGNMCVPLIDYYTQ).

The protein belongs to the NqrB/RnfD family. The complex is composed of six subunits: RnfA, RnfB, RnfC, RnfD, RnfE and RnfG. FMN is required as a cofactor.

It is found in the cell inner membrane. Its function is as follows. Part of a membrane-bound complex that couples electron transfer with translocation of ions across the membrane. This chain is Ion-translocating oxidoreductase complex subunit D, found in Psychromonas ingrahamii (strain DSM 17664 / CCUG 51855 / 37).